Reading from the N-terminus, the 209-residue chain is Uracil phosphoribosyltransferase (209 aa).

Residues Arg79, Arg104, and 131–139 each bind 5-phospho-alpha-D-ribose 1-diphosphate; that span reads DPMLATGNS. Residues Ile194 and 199–201 contribute to the uracil site; that span reads GDA. Residue Asp200 participates in 5-phospho-alpha-D-ribose 1-diphosphate binding.

This sequence belongs to the UPRTase family. Mg(2+) serves as cofactor.

The catalysed reaction is UMP + diphosphate = 5-phospho-alpha-D-ribose 1-diphosphate + uracil. It participates in pyrimidine metabolism; UMP biosynthesis via salvage pathway; UMP from uracil: step 1/1. Allosterically activated by GTP. Functionally, catalyzes the conversion of uracil and 5-phospho-alpha-D-ribose 1-diphosphate (PRPP) to UMP and diphosphate. The protein is Uracil phosphoribosyltransferase of Sinorhizobium medicae (strain WSM419) (Ensifer medicae).